The primary structure comprises 156 residues: Small ribosomal subunit protein uS7 (156 aa).

It belongs to the universal ribosomal protein uS7 family. In terms of assembly, part of the 30S ribosomal subunit. Contacts proteins S9 and S11.

Functionally, one of the primary rRNA binding proteins, it binds directly to 16S rRNA where it nucleates assembly of the head domain of the 30S subunit. Is located at the subunit interface close to the decoding center, probably blocks exit of the E-site tRNA. The protein is Small ribosomal subunit protein uS7 of Leuconostoc citreum (strain KM20).